Here is a 252-residue protein sequence, read N- to C-terminus: 2-succinyl-6-hydroxy-2,4-cyclohexadiene-1-carboxylate synthase (252 aa).

This sequence belongs to the AB hydrolase superfamily. MenH family. Monomer.

The catalysed reaction is 5-enolpyruvoyl-6-hydroxy-2-succinyl-cyclohex-3-ene-1-carboxylate = (1R,6R)-6-hydroxy-2-succinyl-cyclohexa-2,4-diene-1-carboxylate + pyruvate. The protein operates within quinol/quinone metabolism; 1,4-dihydroxy-2-naphthoate biosynthesis; 1,4-dihydroxy-2-naphthoate from chorismate: step 3/7. Its pathway is quinol/quinone metabolism; menaquinone biosynthesis. Its function is as follows. Catalyzes a proton abstraction reaction that results in 2,5-elimination of pyruvate from 2-succinyl-5-enolpyruvyl-6-hydroxy-3-cyclohexene-1-carboxylate (SEPHCHC) and the formation of 2-succinyl-6-hydroxy-2,4-cyclohexadiene-1-carboxylate (SHCHC). The chain is 2-succinyl-6-hydroxy-2,4-cyclohexadiene-1-carboxylate synthase from Escherichia coli O17:K52:H18 (strain UMN026 / ExPEC).